The sequence spans 875 residues: MSCIQIISSSQTSIAGHRKLCNKLFTLRTQEGFETDILRALNIILTVKKGNSNADRVLRFLVTFVNYLQQKDPEIDIVQPILKHILRGLDAKDKTVRYRCCQIIARVVNCVKEIDDDLYNTLKEKLLSRVLDRESIVRLEAVVALSRLQEDTGDEENDVRNILLFLLQNDPSSEVRRSVLLNIEVSNSTLPFILERARDVDAANRKCVYARVLPKIGDFRYLSIKKRVRILKWGLNDRDESVEKAAADMLAYQWIENADNNLLELLERLDVSNNSDVAVLAIKKFFDVRVDSLSQLEFPEQFWLELTAESSLLARTFNEICIEKNYTDLLDKMPEVVQLTYYIERQYVSLRDKSSYDESCFIIEQLLYIGLSQDMVDEIGRRKLLKSLTNSLSTMALPDSLISLHIELLRKLCSSENDFCSLLVEIITEVFEQGHSQNQTEEQGNSNAPELNKNDYEGEEITVSQKSPSPSLPPNELNEPEPDDMDGYKEAFNELRCLSYVQCLFENITSSLNENLYMVDMLKTLIIPAVRSHDLPIREKGLECLSLVCLLNADLAFENVPLYLHCYEKGSVVLKCTAIRTLTDMLIQHGKAKFTEYEDAISSILFEALGEFENAELQTLGAEAIAKLLVILHYRDELFLKPLIIQYFEPNTVDNHALRQVLGYFFPVYAFGAHENQWRIATIFCDALLSLLEIYRDLDEDDVQLSIGHIAQQMLDWTDNEKLYERKTQTGDDYIALNHNVHLHLANMIFESLPNASEGKERKFMISLLGKLKIPTDLPSSDYQRTKRKLETYESHGFTMDSTSLSILAKFERMLLQNEEARSKFEETEEERLMENAEENEHAGAEAISGEIIPDTVEANMEDEEEVYVKQEEDL.

6 HEAT repeats span residues 55-76 (DRVLRFLVTFVNYLQQKDPEID), 77-113 (IVQPILKHILRGLDAKDKTVRYRCCQIIARVVNCVKE), 117-154 (DLYNTLKEKLLSRVLDRESIVRLEAVVALSRLQEDTGD), 157-192 (NDVRNILLFLLQNDPSSEVRRSVLLNIEVSNSTLPF), 222-259 (LSIKKRVRILKWGLNDRDESVEKAAADMLAYQWIENAD), and 379-418 (IGRRKLLKSLTNSLSTMALPDSLISLHIELLRKLCSSEND). Residues 459–485 (EEITVSQKSPSPSLPPNELNEPEPDDM) are disordered. HEAT repeat units follow at residues 516 to 554 (LYMVDMLKTLIIPAVRSHDLPIREKGLECLSLVCLLNAD), 556 to 591 (AFENVPLYLHCYEKGSVVLKCTAIRTLTDMLIQHGK), and 740 to 778 (NVHLHLANMIFESLPNASEGKERKFMISLLGKLKIPTDL). Over residues 831–844 (ERLMENAEENEHAG) the composition is skewed to basic and acidic residues. The tract at residues 831-875 (ERLMENAEENEHAGAEAISGEIIPDTVEANMEDEEEVYVKQEEDL) is disordered.

This sequence belongs to the CND3 (condensin subunit 3) family. As to quaternary structure, component of the condensin complex, which contains the cut14/smc2 and cut3/smc2 heterodimer, and three non SMC subunits that probably regulate the complex: cnd1, cnd2 and cnd3.

The protein resides in the nucleus. The protein localises to the cytoplasm. It is found in the chromosome. Regulatory subunit of the condensin complex, a complex required for conversion of interphase chromatin into mitotic-like condense chromosomes. The condensin complex probably introduces positive supercoils into relaxed DNA in the presence of type I topoisomerases and converts nicked DNA into positive knotted forms in the presence of type II topoisomerases. The condensin complex probably also plays a role during interphase. In Schizosaccharomyces pombe (strain 972 / ATCC 24843) (Fission yeast), this protein is Condensin complex subunit 3 (cnd3).